Reading from the N-terminus, the 77-residue chain is Conotoxin Mr8.2 (77 aa).

Positions 1-16 (MLRLITAAVLVSACLA) are cleaved as a signal peptide. The propeptide occupies 17 to 32 (YPQKKRTPPQTRPTSR).

This sequence belongs to the conotoxin B2 family. In terms of processing, contains 5 disulfide bonds. As to expression, expressed by the venom duct.

The protein resides in the secreted. This chain is Conotoxin Mr8.2, found in Conus marmoreus (Marble cone).